Consider the following 275-residue polypeptide: MAVVTMKELLAGGVHFGHQTRRWNPKMKRFIFTERNGIYIIDLQQSLSYIERAYEFVKDTVARGGTVLFVGTKKQAQQAIAEQATRVGMPYVNQRWLGGMLTNFSTVYKRLQRLKELELLEQNGSLFGQATKKEALMLQREKEKLERTLGGIRDMTRLPAAVWIVDTKKEHIAVDEARKLGIPVVAILDTNCDPDEVDYPIPGNDDAIRSVSLLTRVIADAVAEGLMARAAARATDGKPEPEPVPGQELGADEPLADWERELLARQGVDADELGV.

Positions A232–A256 are disordered.

It belongs to the universal ribosomal protein uS2 family.

This chain is Small ribosomal subunit protein uS2, found in Acidothermus cellulolyticus (strain ATCC 43068 / DSM 8971 / 11B).